The primary structure comprises 78 residues: Large ribosomal subunit protein eL20 (78 aa).

Belongs to the eukaryotic ribosomal protein eL20 family. As to quaternary structure, part of the 50S ribosomal subunit. Binds 23S rRNA.

This Methanothermobacter thermautotrophicus (strain ATCC 29096 / DSM 1053 / JCM 10044 / NBRC 100330 / Delta H) (Methanobacterium thermoautotrophicum) protein is Large ribosomal subunit protein eL20.